Consider the following 237-residue polypeptide: tRNA-splicing endonuclease subunit Sen2-1 (237 aa).

Catalysis depends on residues Tyr-148, His-156, and Lys-190.

Belongs to the tRNA-intron endonuclease family. In terms of assembly, tRNA splicing endonuclease is a heterotetramer composed of SEN2, SEN15, SEN34/LENG5 and SEN54.

It localises to the nucleus. It carries out the reaction pretRNA = a 3'-half-tRNA molecule with a 5'-OH end + a 5'-half-tRNA molecule with a 2',3'-cyclic phosphate end + an intron with a 2',3'-cyclic phosphate and a 5'-hydroxyl terminus.. In terms of biological role, constitutes one of the two catalytic subunit of the tRNA-splicing endonuclease complex, a complex responsible for identification and cleavage of the splice sites in pre-tRNA. It cleaves pre-tRNA at the 5'- and 3'-splice sites to release the intron. The products are an intron and two tRNA half-molecules bearing 2',3'-cyclic phosphate and 5'-OH termini. There are no conserved sequences at the splice sites, but the intron is invariably located at the same site in the gene, placing the splice sites an invariant distance from the constant structural features of the tRNA body. Probably carries the active site for 5'-splice site cleavage. In Arabidopsis thaliana (Mouse-ear cress), this protein is tRNA-splicing endonuclease subunit Sen2-1 (SEN1).